The sequence spans 423 residues: Subtilisin-like protease 2 (423 aa).

The signal sequence occupies residues 1-17; sequence MQLLNLGLLLLLPFVAG. Positions 18-123 are excised as a propeptide; the sequence is EIAPQPEPLR…VHPDQHVYLA (106 aa). Residues 37–123 enclose the Inhibitor I9 domain; that stretch reads QYIVTLKEGL…VHPDQHVYLA (87 aa). Residues 132–423 form the Peptidase S8 domain; the sequence is RWGLGYMSSK…RKFTLPKNTK (292 aa). Active-site charge relay system residues include D170 and H202. N-linked (GlcNAc...) asparagine glycans are attached at residues N249, N262, and N349. S358 serves as the catalytic Charge relay system. N389 is a glycosylation site (N-linked (GlcNAc...) asparagine).

Belongs to the peptidase S8 family.

The protein resides in the secreted. Functionally, secreted subtilisin-like serine protease with keratinolytic activity that contributes to pathogenicity. The sequence is that of Subtilisin-like protease 2 (SUB2) from Arthroderma otae (strain ATCC MYA-4605 / CBS 113480) (Microsporum canis).